The chain runs to 572 residues: Probable inactive glycosyltransferase 25 family member 3 (572 aa).

4 N-linked (GlcNAc...) asparagine glycosylation sites follow: Asn-52, Asn-130, Asn-214, and Asn-337. Residues 569 to 572 (RDEL) carry the Prevents secretion from ER motif.

It belongs to the glycosyltransferase 25 family.

It is found in the endoplasmic reticulum lumen. Functionally, probable cell adhesion protein involved in leukocyte transmigration across the blood-brain barrier. Does not express any beta-galactosyltransferase activity in vitro. This chain is Probable inactive glycosyltransferase 25 family member 3 (Cercam), found in Rattus norvegicus (Rat).